A 367-amino-acid chain; its full sequence is MSANGSSVAQLLWQPPVCRSWKPDVEGAVYHLANCFLLMGFMAGSGVYGCFYLFGILGPGYLCCVLWGWFDACGLDIVLWNVLLTVACLLQLAQLVYRVRVNTLPEEFNLLYRTLCLPLQVPLQVYKEIVHCCHEQVLTLATEQTYAVEGETPINRLSLLLSGRVRVSQDGQFLHYIFPYQFMDSPEWESLHPSEEGTFQVTLTAETECSYISWPRKNLYLLLNRERYISRLFSALLGYDISEKLYTLNDKLFAKFGLRFDIRLPSLYHVLSPSASDGEPESEKDDEEALEAAVSPAQARPICIVPTPPCSAPPATTNFPVPLPRARMPRMPRPDSGNLASRRPLQNSSQVMSRSQAPLAPIHTPEL.

Asn4 carries N-linked (GlcNAc...) asparagine glycosylation. 2 consecutive transmembrane segments (helical) span residues 36-56 (FLLM…LFGI) and 77-97 (IVLW…QLVY). 2 disordered regions span residues 273–292 (PSAS…ALEA) and 312–367 (APPA…TPEL). A compositionally biased stretch (acidic residues) spans 278–290 (GEPESEKDDEEAL). Polar residues predominate over residues 344-356 (PLQNSSQVMSRSQ). Asn347 carries N-linked (GlcNAc...) asparagine glycosylation. A Phosphothreonine modification is found at Thr364.

This sequence belongs to the popeye family. Expressed in the developing and adult heart, with high expression levels in the sinus and atrioventricular nodes. Also expressed in the bladder and skeletal muscle.

Its subcellular location is the membrane. The protein localises to the cell membrane. It is found in the sarcolemma. In terms of biological role, important for the maintenance of cardiac function. Plays a regulatory function in heart rate dynamics mediated, at least in part, through cAMP-binding and, probably, by increasing cell surface expression of the potassium channel KCNK2 and enhancing current density. The protein is Popeye domain-containing protein 2 (Popdc2) of Mus musculus (Mouse).